Reading from the N-terminus, the 288-residue chain is Putative alkaline ceramidase dcd3A (288 aa).

N-linked (GlcNAc...) asparagine glycosylation occurs at Asn-23. Transmembrane regions (helical) follow at residues 41-61 (IISLFGIYGIWIMMPNFGTGV), 78-98 (VILSYISLIVVGVGSAFYHAT), 105-125 (LFDELPMIYTALIMLYIMVTV), 146-166 (HLLPYLLIAYGLFVTITILVI), 172-192 (ILQVSFGALVFYVVFHSIYLI), 206-226 (SYLYKYAFVSMLVGFTCWVVE), and 240-260 (LHAFWHFFTGMSTYVWTQFLI).

Belongs to the alkaline ceramidase family.

It localises to the membrane. The protein is Putative alkaline ceramidase dcd3A (dcd3A) of Dictyostelium discoideum (Social amoeba).